The sequence spans 97 residues: YcgL domain-containing protein PSPPH_1548 (97 aa).

The YcgL domain maps to 3 to 87 (RICSIYRSPK…AEDDYIEHLP (85 aa)).

The protein is YcgL domain-containing protein PSPPH_1548 of Pseudomonas savastanoi pv. phaseolicola (strain 1448A / Race 6) (Pseudomonas syringae pv. phaseolicola (strain 1448A / Race 6)).